The primary structure comprises 434 residues: Trigger factor (434 aa).

The PPIase FKBP-type domain maps to 161 to 246 (EDRVTVDFNG…LKKVEERELP (86 aa)).

The protein belongs to the FKBP-type PPIase family. Tig subfamily.

Its subcellular location is the cytoplasm. It catalyses the reaction [protein]-peptidylproline (omega=180) = [protein]-peptidylproline (omega=0). Involved in protein export. Acts as a chaperone by maintaining the newly synthesized protein in an open conformation. Functions as a peptidyl-prolyl cis-trans isomerase. The chain is Trigger factor from Proteus mirabilis (strain HI4320).